The chain runs to 413 residues: Glucose-1-phosphate adenylyltransferase (413 aa).

Residues G161, 176-177, and S195 contribute to the alpha-D-glucose 1-phosphate site; that span reads EK.

Belongs to the bacterial/plant glucose-1-phosphate adenylyltransferase family. Homotetramer.

It carries out the reaction alpha-D-glucose 1-phosphate + ATP + H(+) = ADP-alpha-D-glucose + diphosphate. It functions in the pathway glycan biosynthesis; glycogen biosynthesis. Functionally, involved in the biosynthesis of ADP-glucose, a building block required for the elongation reactions to produce glycogen. Catalyzes the reaction between ATP and alpha-D-glucose 1-phosphate (G1P) to produce pyrophosphate and ADP-Glc. The polypeptide is Glucose-1-phosphate adenylyltransferase (Anaeromyxobacter dehalogenans (strain 2CP-C)).